A 324-amino-acid polypeptide reads, in one-letter code: Phospho-N-acetylmuramoyl-pentapeptide-transferase (324 aa).

Helical transmembrane passes span 13–33, 57–77, 85–105, 121–141, 143–163, 179–199, 201–221, 238–260, and 303–323; these read VLSA…IFIP, GTPT…MLII, GMIV…DDIL, MILL…NIGT, IIIP…PLVV, IDGL…IVGF, TGHY…LGFL, LALG…IIIV, and VKLV…GFIA.

This sequence belongs to the glycosyltransferase 4 family. MraY subfamily. Mg(2+) serves as cofactor.

It localises to the cell membrane. The enzyme catalyses UDP-N-acetyl-alpha-D-muramoyl-L-alanyl-gamma-D-glutamyl-meso-2,6-diaminopimeloyl-D-alanyl-D-alanine + di-trans,octa-cis-undecaprenyl phosphate = di-trans,octa-cis-undecaprenyl diphospho-N-acetyl-alpha-D-muramoyl-L-alanyl-D-glutamyl-meso-2,6-diaminopimeloyl-D-alanyl-D-alanine + UMP. It functions in the pathway cell wall biogenesis; peptidoglycan biosynthesis. In terms of biological role, catalyzes the initial step of the lipid cycle reactions in the biosynthesis of the cell wall peptidoglycan: transfers peptidoglycan precursor phospho-MurNAc-pentapeptide from UDP-MurNAc-pentapeptide onto the lipid carrier undecaprenyl phosphate, yielding undecaprenyl-pyrophosphoryl-MurNAc-pentapeptide, known as lipid I. The chain is Phospho-N-acetylmuramoyl-pentapeptide-transferase from Clostridium botulinum (strain Eklund 17B / Type B).